The sequence spans 64 residues: Protein translocase subunit SecE (64 aa).

The helical transmembrane segment at 35-55 (LVVLGTVAFITVFFAVVDYGI) threads the bilayer.

It belongs to the SecE/SEC61-gamma family. In terms of assembly, component of the Sec protein translocase complex. Heterotrimer consisting of SecY, SecE and SecG subunits. The heterotrimers can form oligomers, although 1 heterotrimer is thought to be able to translocate proteins. Interacts with the ribosome. Interacts with SecDF, and other proteins may be involved. Interacts with SecA.

It localises to the cell membrane. In terms of biological role, essential subunit of the Sec protein translocation channel SecYEG. Clamps together the 2 halves of SecY. May contact the channel plug during translocation. The protein is Protein translocase subunit SecE of Halalkalibacterium halodurans (strain ATCC BAA-125 / DSM 18197 / FERM 7344 / JCM 9153 / C-125) (Bacillus halodurans).